A 473-amino-acid polypeptide reads, in one-letter code: Glutamyl-tRNA reductase (473 aa).

Substrate is bound by residues 49 to 52 (TCNR), Ser-109, 114 to 116 (EHQ), and Gln-120. Cys-50 functions as the Nucleophile in the catalytic mechanism. 189–194 (GAGAMA) provides a ligand contact to NADP(+). The segment at 422-473 (VAISAPQPSTDSPARAAYQPTDEAATDAEPRRDDAEPPSAAAAQDAGRESRP) is disordered.

This sequence belongs to the glutamyl-tRNA reductase family. In terms of assembly, homodimer.

The catalysed reaction is (S)-4-amino-5-oxopentanoate + tRNA(Glu) + NADP(+) = L-glutamyl-tRNA(Glu) + NADPH + H(+). The protein operates within porphyrin-containing compound metabolism; protoporphyrin-IX biosynthesis; 5-aminolevulinate from L-glutamyl-tRNA(Glu): step 1/2. Its function is as follows. Catalyzes the NADPH-dependent reduction of glutamyl-tRNA(Glu) to glutamate 1-semialdehyde (GSA). The polypeptide is Glutamyl-tRNA reductase (Acidothermus cellulolyticus (strain ATCC 43068 / DSM 8971 / 11B)).